The chain runs to 212 residues: MKKKMIPTTILLSALIFSLSPICEAVWLTVPHTGSKCVSEEIQSNVIVLADYLVISEEHSIFPTVSVKVTAPYGTVLHHRENTTNGQFAFTTQESGTYLACFEADAKSHGNKDFSINIDWKTGIAAKDWDSIARKEKIEGVELEFKKLEGAVEAIHENLIYLRNREAEMRIVSEKTNSRVAWYSIMSLGICIVVSGLQILYLKQYFEKKKLI.

The first 25 residues, 1 to 25, serve as a signal peptide directing secretion; sequence MKKKMIPTTILLSALIFSLSPICEA. Over 26–179 the chain is Lumenal; that stretch reads VWLTVPHTGS…RIVSEKTNSR (154 aa). Positions 35–147 constitute a GOLD domain; the sequence is SKCVSEEIQS…IEGVELEFKK (113 aa). Residue N82 is glycosylated (N-linked (GlcNAc...) asparagine). Residues 133-155 are a coiled coil; it reads ARKEKIEGVELEFKKLEGAVEAI. 2 positions are modified to omega-N-methylated arginine: R165 and R170. The chain crosses the membrane as a helical span at residues 180–200; it reads VAWYSIMSLGICIVVSGLQIL. At 201–212 the chain is on the cytoplasmic side; sequence YLKQYFEKKKLI. The COPII vesicle coat-binding motif lies at 205-206; the sequence is YF. Positions 205–212 match the COPI vesicle coat-binding motif; the sequence is YFEKKKLI.

It belongs to the EMP24/GP25L family. As to quaternary structure, probably oligomerizes with other members of the EMP24/GP25L family. Associates with the COPI vesicle coat (coatomer). Associates with the COPII vesicle coat (coatomer).

The protein resides in the endoplasmic reticulum membrane. It localises to the golgi apparatus membrane. In terms of biological role, involved in vesicular protein trafficking. Mainly functions in the early secretory pathway. Required for trafficking GLL23, a component of the PYK10 complex. May act as a receptor facilitating its packing into COPII carriers and export from the endoplasmic reticulum. This is Transmembrane emp24 domain-containing protein p24delta4 (CYB) from Arabidopsis thaliana (Mouse-ear cress).